A 278-amino-acid polypeptide reads, in one-letter code: Large ribosomal subunit protein uL2 (278 aa).

The interval 201-278 is disordered; the sequence is HGNINDGKAG…IMRSRHQRKK (78 aa). The span at 210 to 221 shows a compositional bias: basic residues; the sequence is GRSRWRGKRPHV.

It belongs to the universal ribosomal protein uL2 family. As to quaternary structure, part of the 50S ribosomal subunit. Forms a bridge to the 30S subunit in the 70S ribosome.

In terms of biological role, one of the primary rRNA binding proteins. Required for association of the 30S and 50S subunits to form the 70S ribosome, for tRNA binding and peptide bond formation. It has been suggested to have peptidyltransferase activity; this is somewhat controversial. Makes several contacts with the 16S rRNA in the 70S ribosome. This chain is Large ribosomal subunit protein uL2, found in Agrobacterium fabrum (strain C58 / ATCC 33970) (Agrobacterium tumefaciens (strain C58)).